A 237-amino-acid polypeptide reads, in one-letter code: Oil body-associated protein 2C (237 aa).

This sequence belongs to the OBAP family.

The protein is Oil body-associated protein 2C of Arabidopsis thaliana (Mouse-ear cress).